A 372-amino-acid chain; its full sequence is 4-hydroxy-3-methylbut-2-en-1-yl diphosphate synthase (flavodoxin) (372 aa).

4 residues coordinate [4Fe-4S] cluster: C270, C273, C305, and E312.

This sequence belongs to the IspG family. The cofactor is [4Fe-4S] cluster.

It carries out the reaction (2E)-4-hydroxy-3-methylbut-2-enyl diphosphate + oxidized [flavodoxin] + H2O + 2 H(+) = 2-C-methyl-D-erythritol 2,4-cyclic diphosphate + reduced [flavodoxin]. It functions in the pathway isoprenoid biosynthesis; isopentenyl diphosphate biosynthesis via DXP pathway; isopentenyl diphosphate from 1-deoxy-D-xylulose 5-phosphate: step 5/6. In terms of biological role, converts 2C-methyl-D-erythritol 2,4-cyclodiphosphate (ME-2,4cPP) into 1-hydroxy-2-methyl-2-(E)-butenyl 4-diphosphate. This chain is 4-hydroxy-3-methylbut-2-en-1-yl diphosphate synthase (flavodoxin), found in Citrobacter koseri (strain ATCC BAA-895 / CDC 4225-83 / SGSC4696).